Here is a 740-residue protein sequence, read N- to C-terminus: Catalase-peroxidase 2 (740 aa).

The first 27 residues, 1–27 (MFKKTKPRISILALTISCAIYSGAALA), serve as a signal peptide directing secretion. The tryptophyl-tyrosyl-methioninium (Trp-Tyr) (with M-254) cross-link spans 106-228 (WHSAGTYRIY…LAAVQMGLIY (123 aa)). H107 functions as the Proton acceptor in the catalytic mechanism. Residues 228–254 (YVNPEGPNGVPDPLLAAKDIRDTFGRM) constitute a cross-link (tryptophyl-tyrosyl-methioninium (Tyr-Met) (with W-106)). Position 269 (H269) interacts with heme b.

The protein belongs to the peroxidase family. Peroxidase/catalase subfamily. Homodimer or homotetramer. Requires heme b as cofactor. In terms of processing, formation of the three residue Trp-Tyr-Met cross-link is important for the catalase, but not the peroxidase activity of the enzyme.

It catalyses the reaction H2O2 + AH2 = A + 2 H2O. It carries out the reaction 2 H2O2 = O2 + 2 H2O. Bifunctional enzyme with both catalase and broad-spectrum peroxidase activity. The sequence is that of Catalase-peroxidase 2 from Cellvibrio japonicus (strain Ueda107) (Pseudomonas fluorescens subsp. cellulosa).